The following is a 1873-amino-acid chain: MALEVESAFSLSYLLKENKQTSNNLFSLIQVPYTKMTHAKGKKTHLLRCILGSPFETLTKSSIRRSLKNLREVCNLPYCNFKKIPKNISYKYQNPFLKLYEINNNFINCKVGATGNTNSTYDWRNLSTIGNGWSVTSYHNDSVSRLHVSMVNNIPNSNTKKLSWWVTRVRSKNPWKRPYKVIYQRDFRDDGIKPYVSEFILYAPKNRADLEMQSILLSSVECFQDIKYALNYWTNLKFKEICNSALKRFTQTNIIITPVKPRVVSVNKAREVSSSVEVKLQRYEREGEVFVVSKAGKEDTRVLNDDNAIRNLFNATLNGGKYKLHPEAKSATGKRFKYYKDGFCWLDVFADANRRIPEWVKPHCLLTGSVLMSCGLWDFAKRKMVSVSHGLLHYDRKLERSSARAGVRDFVGASNEAVQREDFRDLDLRVEEFAERVLETANLRSDNRLIDNILTRASDYINKKSKESKELDINVCLSMDEKKMITNLFPDIQMSFNQKSYSNHGVFNAMRACENFYFSRKFKNSDYIDAGGDVVSTLRSKNHNVHICSPRLDLKDAARHIQRATVIDGLKGYGETISFCTNKTEDCAVNRDIIIAVEVYDMTLRDMAKAMLSHGSRKFEFSCIIPPEIFTKECNVELYEGRLKVTRIGDNVEYYYGSNGETFSHSCQTLKDILSVQVFQFGGRVFKKTLEHSRGQLHFFSICICEKIEPGSVKLKTYYQRSELDKVTLRIPVKDSFGVVTHYIIKEDREFVSSMIEYVANTGIKIDDKMVEWTYSQYRAKKTVTIKSGKVTQKETRIRKELIPGFIAIIMSEGIRAREKTHYLAKMLYTSHYKPSIVNIIFRLIMHFLGGTKRFIYESLVDCLKFLTNSDYIDTIVNTESRIEDLDKWFVFEQNVTITTDAEDQPSILEQSVKTFLSKYSEDVYERGDRSEFELEEFSSEQDLVDQLLNSGGGSKEDEWFYSYIFSIVRTKCTLSLAWRWTNRIFNFITSCRAKGKDFVKYIYEIIKIIINKPWEALCHYLVQGYKTVLKIPMTCVDSVNYLKRKSLEKILSYFSHERADDEYIFPGYDSDFSEESGDYGDENTELDSRSRCTVIKSKVEMLFRNIKGHIEKFLQRCGIIDQYNKIYHWFKSILTDVDCFNSVLNFITHTGCDALLAVLTGHFSIASCALKFMTDVVIEKNLSEKHHTTTKLIAGNLTQCIYKLDFIHPIWIPIRWGVKEISKIHIKKKLLNWRSTKEVTNESICKDLVHKSYIKYFDIKKAVWLLWFSLLIIFLHPTLGFFILFSIYPAIEIKRYYNNVVCFNNIKMSYPHVIDRLGGTYNFAKLKKAVREKFSENKSQGVKISEIPAEKDEDVMPPLEEVETPKRSVGRPSSKQDDIEDECNIKEDPTESLNFSNIEATSNRYDTLRVGNSKLCKFLRFYPKSKCYANIQTGDLIRDSIEEFYHLERSKLDIEISKMQRVVEIMNDTGRMLDNVRRMIDDRSMYVTLDGVSWYRLGCKDKNPAKEDFKAIFDHNFNIMEGNAKVKEFAVSSDEWRGMYSNERCRAIEQLFNDNNEMVRRPDVNGLKFYNKPPGAGKTTTIAKLMSKDLKNKVKCLALSYTKVGRLELIDKLKKDGIEKPEKYVKTYDSFLMNNDNILEIVNLYCDEVFMMHAGHFLTLLTKIAYQNGYCYGDVNQIPFINRDPYTPAYLSREFFRKQDLNYDTYTYRCPLDTCYLLSNLKDEMGNIIYAGGVKNVNEVYPTIRSLNLFGINVVGEVPVEYNAKYLTFTQDEKLNLQRHIDSQGGCRNAVSTVNEAQGCTFSEVNLVRLVQFDNPVMSDINQFVVAISRHTTTFKYFTPHSRLNDRVSNAISSLQSVSDFVLKDYHFRQCL.

Catalysis depends on for leader protease activity residues cysteine 344 and histidine 393. An Alphavirus-like MT domain is found at 495–674 (SFNQKSYSNH…HSCQTLKDIL (180 aa)). The tract at residues 1356 to 1381 (VMPPLEEVETPKRSVGRPSSKQDDIE) is disordered. A (+)RNA virus helicase ATP-binding domain is found at 1538 to 1705 (RGMYSNERCR…FFRKQDLNYD (168 aa)). Positions 1706–1873 (TYTYRCPLDT…LKDYHFRQCL (168 aa)) constitute a (+)RNA virus helicase C-terminal domain.

The catalysed reaction is ATP + H2O = ADP + phosphate + H(+). The protein is Replicase polyprotein 1a of Beta vulgaris (Sugar beet).